We begin with the raw amino-acid sequence, 278 residues long: Cation-dependent mannose-6-phosphate receptor (278 aa).

The first 21 residues, 1-21, serve as a signal peptide directing secretion; the sequence is MFPLSGCWRTELLLLLLLAVA. Topologically, residues 22–188 are lumenal; that stretch reads VRESWQIEEK…ACSPEVSHLS (167 aa). The region spanning 31–182 is the MRH domain; that stretch reads KSCDLVGEKD…EMDSSLACSP (152 aa). Cysteines 33 and 79 form a disulfide. 5 N-linked (GlcNAc...) asparagine glycosylation sites follow: asparagine 58, asparagine 84, asparagine 95, asparagine 108, and asparagine 114. 2 disulfide bridges follow: cysteine 133/cysteine 168 and cysteine 146/cysteine 180. A helical membrane pass occupies residues 189–209; sequence VGSILLVIFASLVAVYIIGGF. Residues 210–278 are Cytoplasmic-facing; that stretch reads LYQRLVVGAK…EERDDHLLPM (69 aa). The segment at 256-278 is disordered; sequence YRGVGDDQLGEESEERDDHLLPM. Residue serine 268 is modified to Phosphoserine.

In terms of assembly, homodimer. Binds GGA1, GGA2 and GGA3.

It localises to the lysosome membrane. Its function is as follows. Transport of phosphorylated lysosomal enzymes from the Golgi complex and the cell surface to lysosomes. Lysosomal enzymes bearing phosphomannosyl residues bind specifically to mannose-6-phosphate receptors in the Golgi apparatus and the resulting receptor-ligand complex is transported to an acidic prelyosomal compartment where the low pH mediates the dissociation of the complex. This is Cation-dependent mannose-6-phosphate receptor (M6pr) from Rattus norvegicus (Rat).